The sequence spans 396 residues: MKIKTGARILALSALTTMMFSASALAKIEEGKLVIWINGDKGYNGLAEVGKKFEKDTGIKVTVEHPDKLEEKFPQVAATGDGPDIIFWAHDRFGGYAQSGLLAEITPDKAFQDKLYPFTWDAVRYNGKLIAYPIAVEALSLIYNKDLLPNPPKTWEEIPALDKELKAKGKSALMFNLQEPYFTWPLIAADGGYAFKYENGKYDIKDVGVDNAGAKAGLTFLVDLIKNKHMNADTDYSIAEAAFNKGETAMTINGPWAWSNIDTSKVNYGVTVLPTFKGQPSKPFVGVLSAGINAASPNKELAKEFLENYLLTDEGLEAVNKDKPLGAVALKSYEEELAKDPRIAATMENAQKGEIMPNIPQMSAFWYAVRTAVINAASGRQTVDEALKDAQTRITK.

An N-terminal signal peptide occupies residues 1 to 26; sequence MKIKTGARILALSALTTMMFSASALA.

This sequence belongs to the bacterial solute-binding protein 1 family. As to quaternary structure, the complex is composed of two ATP-binding proteins (MalK), two transmembrane proteins (MalG and MalF) and a solute-binding protein (MalE).

It localises to the periplasm. Part of the ABC transporter complex MalEFGK involved in maltose/maltodextrin import. Binds maltose and higher maltodextrins. The protein is Maltose/maltodextrin-binding periplasmic protein (malE) of Escherichia coli O157:H7.